The primary structure comprises 572 residues: Proline--tRNA ligase (572 aa).

Belongs to the class-II aminoacyl-tRNA synthetase family. ProS type 1 subfamily. In terms of assembly, homodimer.

It is found in the cytoplasm. It carries out the reaction tRNA(Pro) + L-proline + ATP = L-prolyl-tRNA(Pro) + AMP + diphosphate. Functionally, catalyzes the attachment of proline to tRNA(Pro) in a two-step reaction: proline is first activated by ATP to form Pro-AMP and then transferred to the acceptor end of tRNA(Pro). As ProRS can inadvertently accommodate and process non-cognate amino acids such as alanine and cysteine, to avoid such errors it has two additional distinct editing activities against alanine. One activity is designated as 'pretransfer' editing and involves the tRNA(Pro)-independent hydrolysis of activated Ala-AMP. The other activity is designated 'posttransfer' editing and involves deacylation of mischarged Ala-tRNA(Pro). The misacylated Cys-tRNA(Pro) is not edited by ProRS. The chain is Proline--tRNA ligase from Buchnera aphidicola subsp. Acyrthosiphon pisum (strain 5A).